The primary structure comprises 416 residues: Peptide chain release factor subunit 1 (416 aa).

Belongs to the eukaryotic release factor 1 family. In terms of assembly, heterodimer of two subunits, one of which binds GTP.

The protein localises to the cytoplasm. Directs the termination of nascent peptide synthesis (translation) in response to the termination codons UAA, UAG and UGA. The chain is Peptide chain release factor subunit 1 from Halobacterium salinarum (strain ATCC 29341 / DSM 671 / R1).